The chain runs to 168 residues: Pathogenesis-related protein 1A (168 aa).

The signal sequence occupies residues 1–30 (MGFVLFSQLPSFLLVSTLLLFLVISHSCRA). An SCP domain is found at 38–156 (LDAHNTARAD…NGGYVVSCNY (119 aa)).

The protein belongs to the CRISP family. Post-translationally, three disulfide bonds are present.

It localises to the vacuole. Probably involved in the defense reaction of plants against pathogens. This is Pathogenesis-related protein 1A from Nicotiana tabacum (Common tobacco).